A 518-amino-acid polypeptide reads, in one-letter code: Sensor protein kinase HptS (518 aa).

A run of 2 helical transmembrane segments spans residues 20-40 and 222-242; these read IFPV…IYIW and GITL…FGFI. Residues 297-513 enclose the Histidine kinase domain; that stretch reads EQLIHSIEHT…LICYKIPLSR (217 aa). His-325 bears the Phosphohistidine; by autocatalysis mark.

Autophosphorylated.

The protein resides in the cell membrane. It catalyses the reaction ATP + protein L-histidine = ADP + protein N-phospho-L-histidine.. Member of the two-component regulatory system HptS/HptR that regulates genes involved in hexose phosphate transport system in response to changes in extracellular phosphate sources. May act as a sensor protein kinase which is autophosphorylated at a histidine residue and transfers its phosphate group to the conserved aspartic acid residue in the regulatory domain of HptS. In turn, HptS antagonizes CcpA-dependent transcription of a subset of CcpA-regulated genes involved in antibiotic susceptibility. The polypeptide is Sensor protein kinase HptS (hptS) (Staphylococcus aureus (strain Mu50 / ATCC 700699)).